Consider the following 1110-residue polypeptide: Error-prone DNA polymerase (1110 aa).

Residues 1072-1110 (LGELHEPLNDDRREHPDNPAQRIRHPRDVRILPPSRDFH) form a disordered region. Composition is skewed to basic and acidic residues over residues 1073–1088 (GELHEPLNDDRREHPD) and 1097–1110 (PRDVRILPPSRDFH).

It belongs to the DNA polymerase type-C family. DnaE2 subfamily.

The protein localises to the cytoplasm. It catalyses the reaction DNA(n) + a 2'-deoxyribonucleoside 5'-triphosphate = DNA(n+1) + diphosphate. Its function is as follows. DNA polymerase involved in damage-induced mutagenesis and translesion synthesis (TLS). It is not the major replicative DNA polymerase. The sequence is that of Error-prone DNA polymerase from Rhodopseudomonas palustris (strain BisB5).